The sequence spans 247 residues: 2,3-bisphosphoglycerate-dependent phosphoglycerate mutase (247 aa).

Substrate is bound by residues 9 to 16 (RHGESEWN), 22 to 23 (TG), Arg61, 88 to 91 (ERHY), Lys99, 115 to 116 (RR), and 183 to 184 (GN). The active-site Tele-phosphohistidine intermediate is the His10. The active-site Proton donor/acceptor is Glu88.

It belongs to the phosphoglycerate mutase family. BPG-dependent PGAM subfamily.

The enzyme catalyses (2R)-2-phosphoglycerate = (2R)-3-phosphoglycerate. It participates in carbohydrate degradation; glycolysis; pyruvate from D-glyceraldehyde 3-phosphate: step 3/5. In terms of biological role, catalyzes the interconversion of 2-phosphoglycerate and 3-phosphoglycerate. The sequence is that of 2,3-bisphosphoglycerate-dependent phosphoglycerate mutase from Nocardioides sp. (strain ATCC BAA-499 / JS614).